A 319-amino-acid chain; its full sequence is Ankyrin repeat domain-containing protein 1 (319 aa).

Residues 63 to 89 (EKQLEAELKKKKLEQRSKLENLEDLEI) adopt a coiled-coil conformation. ANK repeat units lie at residues 152 to 181 (YKRT…QIEF), 185 to 214 (LEST…KISA), 218 to 247 (LLST…DLNA), 251 to 280 (EGDT…DLTI), and 284 to 315 (AGKT…KTSR).

As to quaternary structure, interacts with TTN/titin and YBX1.

It is found in the nucleus. May play an important role in endothelial cell activation. May act as a nuclear transcription factor that negatively regulates the expression of cardiac genes. This chain is Ankyrin repeat domain-containing protein 1 (ANKRD1), found in Oryctolagus cuniculus (Rabbit).